We begin with the raw amino-acid sequence, 278 residues long: Undecaprenyl-diphosphatase 3 (278 aa).

6 helical membrane passes run 42–62, 88–108, 119–139, 187–207, 224–244, and 254–274; these read DITA…LLYF, YRFG…GVAF, LWFV…ADHV, VAVT…AAAL, ATII…AWLL, and VFIG…ATGI.

This sequence belongs to the UppP family.

The protein localises to the cell membrane. It carries out the reaction di-trans,octa-cis-undecaprenyl diphosphate + H2O = di-trans,octa-cis-undecaprenyl phosphate + phosphate + H(+). Catalyzes the dephosphorylation of undecaprenyl diphosphate (UPP). Confers resistance to bacitracin. The sequence is that of Undecaprenyl-diphosphatase 3 from Frankia casuarinae (strain DSM 45818 / CECT 9043 / HFP020203 / CcI3).